The chain runs to 101 residues: Large ribosomal subunit protein uL23 (101 aa).

Belongs to the universal ribosomal protein uL23 family. Part of the 50S ribosomal subunit. Contacts protein L29, and trigger factor when it is bound to the ribosome.

One of the early assembly proteins it binds 23S rRNA. One of the proteins that surrounds the polypeptide exit tunnel on the outside of the ribosome. Forms the main docking site for trigger factor binding to the ribosome. This is Large ribosomal subunit protein uL23 from Corynebacterium kroppenstedtii (strain DSM 44385 / JCM 11950 / CIP 105744 / CCUG 35717).